A 406-amino-acid polypeptide reads, in one-letter code: Argininosuccinate synthase (406 aa).

ATP-binding positions include 11–19 (AYSGGLDTS) and Ala-38. The L-citrulline site is built by Tyr-91 and Ser-96. Residue Gly-121 participates in ATP binding. Positions 123, 127, and 128 each coordinate L-aspartate. L-citrulline is bound at residue Asn-127. L-citrulline-binding residues include Arg-131, Ser-181, Ser-190, Glu-266, and Tyr-278.

The protein belongs to the argininosuccinate synthase family. Type 1 subfamily. Homotetramer.

It is found in the cytoplasm. It carries out the reaction L-citrulline + L-aspartate + ATP = 2-(N(omega)-L-arginino)succinate + AMP + diphosphate + H(+). Its pathway is amino-acid biosynthesis; L-arginine biosynthesis; L-arginine from L-ornithine and carbamoyl phosphate: step 2/3. This Campylobacter jejuni subsp. jejuni serotype O:2 (strain ATCC 700819 / NCTC 11168) protein is Argininosuccinate synthase.